Here is a 956-residue protein sequence, read N- to C-terminus: Probable hypoxanthine oxidase XdhD (956 aa).

Residues glutamine 414, phenylalanine 445, and alanine 727 each coordinate Mo-molybdopterin.

Belongs to the xanthine dehydrogenase family. Requires [2Fe-2S] cluster as cofactor. Mo-molybdopterin is required as a cofactor.

Probably has no xanthine dehydrogenase activity; however deletion results in increased adenine sensitivity, suggesting that this protein contributes to the conversion of adenine to guanine nucleotides during purine salvage. This is Probable hypoxanthine oxidase XdhD (xdhD) from Escherichia coli O157:H7.